The chain runs to 337 residues: Biotin synthase (337 aa).

The 231-residue stretch at 58–288 (AGSELLHACS…AHPHKIIKFA (231 aa)) folds into the Radical SAM core domain. [4Fe-4S] cluster contacts are provided by Cys-76, Cys-80, and Cys-83. Positions 155, 216, and 286 each coordinate [2Fe-2S] cluster.

This sequence belongs to the radical SAM superfamily. Biotin synthase family. In terms of assembly, homodimer. Requires [4Fe-4S] cluster as cofactor. [2Fe-2S] cluster is required as a cofactor.

It carries out the reaction (4R,5S)-dethiobiotin + (sulfur carrier)-SH + 2 reduced [2Fe-2S]-[ferredoxin] + 2 S-adenosyl-L-methionine = (sulfur carrier)-H + biotin + 2 5'-deoxyadenosine + 2 L-methionine + 2 oxidized [2Fe-2S]-[ferredoxin]. The protein operates within cofactor biosynthesis; biotin biosynthesis; biotin from 7,8-diaminononanoate: step 2/2. Its function is as follows. Catalyzes the conversion of dethiobiotin (DTB) to biotin by the insertion of a sulfur atom into dethiobiotin via a radical-based mechanism. This is Biotin synthase from Pelodictyon phaeoclathratiforme (strain DSM 5477 / BU-1).